Consider the following 343-residue polypeptide: ATP-dependent (S)-NAD(P)H-hydrate dehydratase (343 aa).

The transit peptide at 1 to 42 (MAVHACGAAAAVVALLSAAIALQWSPLYAVLQRALSLHTAHA) directs the protein to the mitochondrion. The YjeF C-terminal domain maps to 49–340 (LFQLVRNIVP…TEVGTAFSRL (292 aa)). An N6-acetyllysine modification is found at K63. Y81 is subject to Phosphotyrosine. (6S)-NADPHX is bound by residues G149 and 202–208 (NHVEFSR). A Phosphoserine modification is found at S216. Residues 242–246 (KGEQD) and 261–270 (GSSRRCGGQG) each bind ATP. A (6S)-NADPHX-binding site is contributed by D271.

Belongs to the NnrD/CARKD family. The cofactor is Mg(2+).

Its subcellular location is the mitochondrion. The catalysed reaction is (6S)-NADHX + ATP = ADP + phosphate + NADH + H(+). The enzyme catalyses (6S)-NADPHX + ATP = ADP + phosphate + NADPH + H(+). Functionally, catalyzes the dehydration of the S-form of NAD(P)HX at the expense of ATP, which is converted to ADP. Together with NAD(P)HX epimerase, which catalyzes the epimerization of the S- and R-forms, the enzyme allows the repair of both epimers of NAD(P)HX, a damaged form of NAD(P)H that is a result of enzymatic or heat-dependent hydration. The sequence is that of ATP-dependent (S)-NAD(P)H-hydrate dehydratase from Mus musculus (Mouse).